The following is a 243-amino-acid chain: MVMEPKKNQNLPSFLNPSRQNQDNDKKRKQTEVKGFDIVVGEKRKKKENEEEDQEIQILYEKEKKKPNKDRHLKVEGRGRRVRLPPLCAARIYQLTKELGHKSDGETLEWLLQHAEPSILSATVNGIKPTESVVSQPPLTADLMICHSVEEASRTQMEANGLWRNETGQTIGGFDLNYGIGFDFNGVPEIGFGDNQTPGLELRLSQVGVLNPQVFQQMGKEQFRVLHHHSHEDQQQSAEENGS.

The segment at 1-55 is disordered; sequence MVMEPKKNQNLPSFLNPSRQNQDNDKKRKQTEVKGFDIVVGEKRKKKENEEEDQE. The span at 8–21 shows a compositional bias: polar residues; that stretch reads NQNLPSFLNPSRQN. Residues 22-35 show a composition bias toward basic and acidic residues; it reads QDNDKKRKQTEVKG. Residues 42-66 adopt a coiled-coil conformation; sequence EKRKKKENEEEDQEIQILYEKEKKK. In terms of domain architecture, TCP spans 68–122; sequence NKDRHLKVEGRGRRVRLPPLCAARIYQLTKELGHKSDGETLEWLLQHAEPSILSA.

Interacts with SPL.

The protein resides in the nucleus. This chain is Transcription factor TCP6 (TCP6), found in Arabidopsis thaliana (Mouse-ear cress).